Here is a 96-residue protein sequence, read N- to C-terminus: MPGKIAVEVAYALPEKQYLQRVTLQEGATVEEAIRASGLLELRTDIDLTKNKVGIYSRPAKLSDSVHDGDRVEIYRPLIADPKELRRQRAEKSANK.

Belongs to the UPF0125 (RnfH) family.

The sequence is that of Protein RnfH from Escherichia coli O139:H28 (strain E24377A / ETEC).